The following is a 163-amino-acid chain: MILEDTADFLAALPSMRSLMGLDLGTQTIGVAVSDTFLSVATPLETVKRRKFTLDAARLSDIVAQRRLGGLVLGLPRNMDGSEGPRCQSTRAFARNLDKSIGSDLPITFWDERLSTVAAERALLEADTSRKRRAEVIDHVAAAYILQGALDRIRVIRAEQDQE.

It belongs to the YqgF nuclease family.

Its subcellular location is the cytoplasm. Its function is as follows. Could be a nuclease involved in processing of the 5'-end of pre-16S rRNA. This is Putative pre-16S rRNA nuclease from Roseobacter denitrificans (strain ATCC 33942 / OCh 114) (Erythrobacter sp. (strain OCh 114)).